The sequence spans 388 residues: Cuticle-degrading protease (388 aa).

The N-terminal stretch at 1–18 is a signal peptide; the sequence is MHLSALLTLLPAVLAAPA. Positions 19–107 are excised as a propeptide; that stretch reads TIGRRAEPAP…IEKDAVMRIS (89 aa). Residues 41–106 form the Inhibitor I9 domain; that stretch reads KYIVKFKDDI…FIEKDAVMRI (66 aa). One can recognise a Peptidase S8 domain in the interval 116–388; the sequence is PWGLGRISHR…TVNYLAYNGA (273 aa). 2 cysteine pairs are disulfide-bonded: Cys-143-Cys-233 and Cys-288-Cys-360. Catalysis depends on charge relay system residues Asp-148 and His-179. Asn-296 carries N-linked (GlcNAc...) asparagine glycosylation. Ser-334 serves as the catalytic Charge relay system.

It belongs to the peptidase S8 family.

Its subcellular location is the secreted. In terms of biological role, capable of breaching the insect cuticle. The sequence is that of Cuticle-degrading protease (PR1) from Metarhizium anisopliae (Entomophthora anisopliae).